A 187-amino-acid chain; its full sequence is Elongation factor P (187 aa).

Belongs to the elongation factor P family.

The protein resides in the cytoplasm. It functions in the pathway protein biosynthesis; polypeptide chain elongation. Functionally, involved in peptide bond synthesis. Stimulates efficient translation and peptide-bond synthesis on native or reconstituted 70S ribosomes in vitro. Probably functions indirectly by altering the affinity of the ribosome for aminoacyl-tRNA, thus increasing their reactivity as acceptors for peptidyl transferase. The chain is Elongation factor P from Leifsonia xyli subsp. xyli (strain CTCB07).